The sequence spans 447 residues: MSHRYIPLTETDKKEMMETIGINSIDELFQDIPEKVRFQGDLNIKPRKSETPLLRELQALANKNVTSDTHVSFLGAGVYDHYIPTVVDHVISRSEFYTAYTPYQPEISQGELQAIFEFQTMIAELTGMDCANSSMYDGGTSFAEAAMLACGHTRNKKIIVSKAVNDQSRAVLHTYAKGQHLEVVEIDVKDTVTDLDALKAAIDEDTACVMVQYPNFFGSIEDLETIKSFTEGTKALFVVSSNPMSLGLLTPPGEFGADLVVGDAQVFGIPAQLGGPHCGYFAATKKLMRKMPGRLVGQTQDDEGNRGFVLTLQAREQHIRRDKATSNICSNQALNALAASVAMSALGKNGVYEMANQNLQKANYMKSRMVEEGFEVLEGTTFNEFVVKFNHPVKEINEKLLDEGFIGGYDLGQVEEQYHNHMLIAVTELRTKEEIDTFIAKVGVFNA.

Belongs to the GcvP family. N-terminal subunit subfamily. As to quaternary structure, the glycine cleavage system is composed of four proteins: P, T, L and H. In this organism, the P 'protein' is a heterodimer of two subunits.

The enzyme catalyses N(6)-[(R)-lipoyl]-L-lysyl-[glycine-cleavage complex H protein] + glycine + H(+) = N(6)-[(R)-S(8)-aminomethyldihydrolipoyl]-L-lysyl-[glycine-cleavage complex H protein] + CO2. In terms of biological role, the glycine cleavage system catalyzes the degradation of glycine. The P protein binds the alpha-amino group of glycine through its pyridoxal phosphate cofactor; CO(2) is released and the remaining methylamine moiety is then transferred to the lipoamide cofactor of the H protein. In Macrococcus caseolyticus (strain JCSC5402) (Macrococcoides caseolyticum), this protein is Probable glycine dehydrogenase (decarboxylating) subunit 1.